Consider the following 70-residue polypeptide: Large ribosomal subunit protein bL31 (70 aa).

Zn(2+)-binding residues include Cys16, Cys18, Cys36, and Cys39.

The protein belongs to the bacterial ribosomal protein bL31 family. Type A subfamily. As to quaternary structure, part of the 50S ribosomal subunit. It depends on Zn(2+) as a cofactor.

In terms of biological role, binds the 23S rRNA. In Fervidobacterium nodosum (strain ATCC 35602 / DSM 5306 / Rt17-B1), this protein is Large ribosomal subunit protein bL31.